The chain runs to 323 residues: Fos-related antigen 2 (323 aa).

Residues 1–27 (MYQDYPGSFDTSSRGSSGSPGHPEPYS) are compositionally biased toward low complexity. Positions 1 to 31 (MYQDYPGSFDTSSRGSSGSPGHPEPYSAGAA) are disordered. Residues 124 to 187 (EEKRRIRRER…EKLEFMLVAH (64 aa)) form the bZIP domain. Residues 126–128 (KRR) are basic motif. Residues 129-136 (IRRERNKL) form a leucine-zipper region. 2 disordered regions span residues 194–214 (SPEERRSPPTSSLQSVRTGAS) and 288–323 (ESPLSPSESCSKAHRRSSSSGDQSSDSLNSPTLLAL). Positions 305–317 (SSSGDQSSDSLNS) are enriched in low complexity.

This sequence belongs to the bZIP family. Fos subfamily. Heterodimer with JUN.

It is found in the nucleus. This is Fos-related antigen 2 (FOSL2) from Gallus gallus (Chicken).